The sequence spans 108 residues: Nitrite reductase (NADH) small subunit (108 aa).

The protein to B.subtilis NasE. In terms of assembly, associates with NirB.

The protein resides in the cytoplasm. It carries out the reaction NH4(+) + 3 NAD(+) + 2 H2O = nitrite + 3 NADH + 5 H(+). Required for activity of the reductase. The chain is Nitrite reductase (NADH) small subunit (nirD) from Escherichia coli O157:H7.